Here is a 135-residue protein sequence, read N- to C-terminus: MAALRPLVKPKIVKKRTKKFIRHQSDRYVKIKRNWRKPRGIDNRVRRRFKGQILMPNIGYGSNKKTKHMLPSGFRKFLVHNVKELEVLLMCNKSYCAEIAHNVSSKNRKAIVERAAQLAIRVTNPNARLRSEENE.

Lys-9 participates in a covalent cross-link: Glycyl lysine isopeptide (Lys-Gly) (interchain with G-Cter in SUMO2). An N6-succinyllysine modification is found at Lys-50. Residue Ser-62 is modified to Phosphoserine.

This sequence belongs to the eukaryotic ribosomal protein eL32 family. As to quaternary structure, component of the large ribosomal subunit.

Its subcellular location is the cytoplasm. Component of the large ribosomal subunit. The ribosome is a large ribonucleoprotein complex responsible for the synthesis of proteins in the cell. The polypeptide is Large ribosomal subunit protein eL32 (RPL32) (Macaca fascicularis (Crab-eating macaque)).